We begin with the raw amino-acid sequence, 300 residues long: uncharacterized protein (300 aa).

The protein belongs to the histone deacetylase family.

Its function is as follows. Putative deacetylase. This is an uncharacterized protein from Picosynechococcus sp. (strain ATCC 27264 / PCC 7002 / PR-6) (Agmenellum quadruplicatum).